The chain runs to 308 residues: Aspartate carbamoyltransferase catalytic subunit (308 aa).

Carbamoyl phosphate is bound by residues Arg-55 and Thr-56. Lys-83 is an L-aspartate binding site. Arg-105, His-133, and Gln-136 together coordinate carbamoyl phosphate. L-aspartate is bound by residues Arg-166 and Arg-220. Residues Gly-261 and Pro-262 each coordinate carbamoyl phosphate.

This sequence belongs to the aspartate/ornithine carbamoyltransferase superfamily. ATCase family. As to quaternary structure, heterododecamer (2C3:3R2) of six catalytic PyrB chains organized as two trimers (C3), and six regulatory PyrI chains organized as three dimers (R2).

The catalysed reaction is carbamoyl phosphate + L-aspartate = N-carbamoyl-L-aspartate + phosphate + H(+). The protein operates within pyrimidine metabolism; UMP biosynthesis via de novo pathway; (S)-dihydroorotate from bicarbonate: step 2/3. Catalyzes the condensation of carbamoyl phosphate and aspartate to form carbamoyl aspartate and inorganic phosphate, the committed step in the de novo pyrimidine nucleotide biosynthesis pathway. This chain is Aspartate carbamoyltransferase catalytic subunit, found in Chlorobaculum parvum (strain DSM 263 / NCIMB 8327) (Chlorobium vibrioforme subsp. thiosulfatophilum).